The sequence spans 220 residues: Iron-sulfur cluster repair protein YtfE (220 aa).

The protein belongs to the RIC family. YtfE subfamily. Homodimer.

Its subcellular location is the cytoplasm. Functionally, di-iron-containing protein involved in the repair of iron-sulfur clusters damaged by oxidative and nitrosative stress conditions. The chain is Iron-sulfur cluster repair protein YtfE from Shigella boydii serotype 4 (strain Sb227).